The chain runs to 379 residues: Putative 8-amino-7-oxononanoate synthase (379 aa).

R21 contacts substrate. Pyridoxal 5'-phosphate is bound at residue 97 to 98 (GY). H122 contributes to the substrate binding site. Residues S169, 194–197 (DDAH), and 223–226 (TLSK) contribute to the pyridoxal 5'-phosphate site. At K226 the chain carries N6-(pyridoxal phosphate)lysine. T340 is a substrate binding site.

This sequence belongs to the class-II pyridoxal-phosphate-dependent aminotransferase family. BioF subfamily. As to quaternary structure, homodimer. Requires pyridoxal 5'-phosphate as cofactor.

It carries out the reaction 6-carboxyhexanoyl-[ACP] + L-alanine + H(+) = (8S)-8-amino-7-oxononanoate + holo-[ACP] + CO2. The protein operates within cofactor biosynthesis; biotin biosynthesis. Catalyzes the decarboxylative condensation of pimeloyl-[acyl-carrier protein] and L-alanine to produce 8-amino-7-oxononanoate (AON), [acyl-carrier protein], and carbon dioxide. The chain is Putative 8-amino-7-oxononanoate synthase (bioF) from Bacillus licheniformis (strain ATCC 14580 / DSM 13 / JCM 2505 / CCUG 7422 / NBRC 12200 / NCIMB 9375 / NCTC 10341 / NRRL NRS-1264 / Gibson 46).